Reading from the N-terminus, the 70-residue chain is Plasticin-S1 (70 aa).

An N-terminal signal peptide occupies residues 1-22 (MAFLKKSLFLVLFLALVPLSIC). Residues 23 to 45 (EEEKREGENEKEQEDDNQSEEKR) constitute a propeptide that is removed on maturation. Residues 25-45 (EKREGENEKEQEDDNQSEEKR) are disordered.

Belongs to the frog skin active peptide (FSAP) family. Plasticin subfamily. As to expression, expressed by the skin glands.

It is found in the secreted. In terms of biological role, the native peptide is a cationic amphipathic alpha-helical antimicrobial peptide with potent activity against both Gram-positive and Gram-negative bacteria. It has weak activity against fungi and shows low hemolytic activity. This is Plasticin-S1 from Phyllomedusa sauvagei (Sauvage's leaf frog).